A 242-amino-acid chain; its full sequence is Proteasome subunit alpha (242 aa).

The protein belongs to the peptidase T1A family. The 20S proteasome core is composed of 14 alpha and 14 beta subunits that assemble into four stacked heptameric rings, resulting in a barrel-shaped structure. The two inner rings, each composed of seven catalytic beta subunits, are sandwiched by two outer rings, each composed of seven alpha subunits. The catalytic chamber with the active sites is on the inside of the barrel. Has a gated structure, the ends of the cylinder being occluded by the N-termini of the alpha-subunits. Is capped at one or both ends by the proteasome regulatory ATPase, PAN.

It localises to the cytoplasm. Its activity is regulated as follows. The formation of the proteasomal ATPase PAN-20S proteasome complex, via the docking of the C-termini of PAN into the intersubunit pockets in the alpha-rings, triggers opening of the gate for substrate entry. Interconversion between the open-gate and close-gate conformations leads to a dynamic regulation of the 20S proteasome proteolysis activity. Component of the proteasome core, a large protease complex with broad specificity involved in protein degradation. The chain is Proteasome subunit alpha from Sulfolobus acidocaldarius (strain ATCC 33909 / DSM 639 / JCM 8929 / NBRC 15157 / NCIMB 11770).